A 732-amino-acid polypeptide reads, in one-letter code: Catalase-peroxidase (732 aa).

The segment at residues 97–220 (WHSAGTYRTG…LAAVQMGLIY (124 aa)) is a cross-link (tryptophyl-tyrosyl-methioninium (Trp-Tyr) (with M-246)). The active-site Proton acceptor is the H98. The segment at residues 220–246 (YVNPEGPDGKPDPVAAGKDIRETFGRM) is a cross-link (tryptophyl-tyrosyl-methioninium (Tyr-Met) (with W-97)). H261 contributes to the heme b binding site.

The protein belongs to the peroxidase family. Peroxidase/catalase subfamily. Homodimer or homotetramer. Heme b serves as cofactor. Post-translationally, formation of the three residue Trp-Tyr-Met cross-link is important for the catalase, but not the peroxidase activity of the enzyme.

It catalyses the reaction H2O2 + AH2 = A + 2 H2O. It carries out the reaction 2 H2O2 = O2 + 2 H2O. Bifunctional enzyme with both catalase and broad-spectrum peroxidase activity. The polypeptide is Catalase-peroxidase (Chlorobium phaeobacteroides (strain BS1)).